The primary structure comprises 587 residues: Methylcrotonoyl-CoA carboxylase beta chain, mitochondrial (587 aa).

Residues 1–26 (MLRILGRRVVSASKELTSIQQWRIRP) constitute a mitochondrion transit peptide. The CoA carboxyltransferase N-terminal domain occupies 68–324 (MEGILSELRS…AAKQGMEGTF (257 aa)). A carboxyltransferase region spans residues 68 to 579 (MEGILSELRS…SAALNRPLED (512 aa)). A CoA carboxyltransferase C-terminal domain is found at 333–579 (EPLYDINELR…SAALNRPLED (247 aa)). Residues 367–396 (EFDEFKKQYGTTLVTGFARIYGQTVGIIGN) are acyl-CoA binding.

The protein belongs to the AccD/PCCB family. As to quaternary structure, probably a heterodimer composed of biotin-containing alpha subunits and beta subunits. As to expression, in roots, cotyledons, leaves, flowers, ovaries, siliques and embryos.

The protein resides in the mitochondrion matrix. The catalysed reaction is 3-methylbut-2-enoyl-CoA + hydrogencarbonate + ATP = 3-methyl-(2E)-glutaconyl-CoA + ADP + phosphate + H(+). The protein operates within amino-acid degradation; L-leucine degradation; (S)-3-hydroxy-3-methylglutaryl-CoA from 3-isovaleryl-CoA: step 2/3. Carboxyltransferase subunit of the 3-methylcrotonyl-CoA carboxylase, an enzyme that catalyzes the conversion of 3-methylcrotonyl-CoA to 3-methylglutaconyl-CoA, a critical step for leucine and isovaleric acid catabolism. The chain is Methylcrotonoyl-CoA carboxylase beta chain, mitochondrial (MCCB) from Arabidopsis thaliana (Mouse-ear cress).